Here is a 571-residue protein sequence, read N- to C-terminus: Protein dead ringer homolog (571 aa).

Disordered stretches follow at residues 45–117 (QHQQ…EPDK) and 190–229 (KRMQ…SCNG). A compositionally biased stretch (basic and acidic residues) spans 49-77 (RMMEQHKNDDVISNDVRCDDFSDGGERQR). Positions 195-206 (DHNIQQSTNHIP) are enriched in polar residues. The span at 207–224 (TPSSASSHTSSGSVTSQT) shows a compositional bias: low complexity. The 93-residue stretch at 249–341 (DIKRKEFLDD…YLYPFECERE (93 aa)) folds into the ARID domain. A compositionally biased stretch (low complexity) spans 459–471 (AAHHAAQQAAQHQ). The disordered stretch occupies residues 459-528 (AAHHAAQQAA…GDRGRHNEMS (70 aa)). An REKLES domain is found at 473–558 (SLKKEIDSDY…GVLFAHSPNH (86 aa)). 2 stretches are compositionally biased toward basic and acidic residues: residues 487–507 (PPEK…DNQR) and 518–527 (MGDRGRHNEM).

It localises to the nucleus. Functionally, transcription factor. The polypeptide is Protein dead ringer homolog (Ci-DRIL1/2) (Ciona intestinalis (Transparent sea squirt)).